The sequence spans 293 residues: Aromatic amino acid exporter YddG (293 aa).

Topologically, residues Met-1 to Ala-6 are cytoplasmic. The 132-residue stretch at Ala-6–Leu-137 folds into the EamA 1 domain. Residues Thr-7–Val-27 form a helical membrane-spanning segment. The Periplasmic segment spans residues Ser-28–Pro-33. A helical membrane pass occupies residues Val-34–Phe-54. At Pro-55–Lys-62 the chain is on the cytoplasmic side. A helical transmembrane segment spans residues Gly-63–Leu-83. The Periplasmic portion of the chain corresponds to Gly-84–Ala-92. The chain crosses the membrane as a helical span at residues Ile-93–Phe-113. Topologically, residues Asn-114–Thr-118 are cytoplasmic. Residues Asn-119–Gly-139 form a helical membrane-spanning segment. Topologically, residues Asp-140–Ser-155 are periplasmic. A helical membrane pass occupies residues Pro-156–Thr-176. In terms of domain architecture, EamA 2 spans Ser-158–Leu-285. Residues Asn-177–Gly-182 are Cytoplasmic-facing. Residues Phe-183–Leu-203 form a helical membrane-spanning segment. At Thr-204–Lys-218 the chain is on the periplasmic side. Residues Leu-219 to His-239 traverse the membrane as a helical segment. The Cytoplasmic portion of the chain corresponds to Gly-240 to Thr-243. A helical transmembrane segment spans residues Ile-244–Leu-264. Residues Ser-265 to Pro-267 are Periplasmic-facing. Residues Leu-268–Leu-288 traverse the membrane as a helical segment. The Cytoplasmic segment spans residues Ala-289–Gly-293.

The protein belongs to the drug/metabolite transporter (DMT) superfamily. Aromatic amino acid/paraquat exporter (ArAA/P-E) (TC 2.A.7.17) family.

It localises to the cell inner membrane. It carries out the reaction L-phenylalanine(in) = L-phenylalanine(out). The catalysed reaction is L-tyrosine(in) = L-tyrosine(out). It catalyses the reaction L-tryptophan(in) = L-tryptophan(out). The enzyme catalyses L-threonine(in) = L-threonine(out). It carries out the reaction L-methionine(in) = L-methionine(out). The catalysed reaction is L-lysine(in) = L-lysine(out). It catalyses the reaction L-glutamate(out) = L-glutamate(in). The enzyme catalyses L-valine(in) = L-valine(out). It carries out the reaction L-isoleucine(in) = L-isoleucine(out). In terms of biological role, amino acid transporter with broad substrate specificity. Can transport various amino acids, including phenylalanine, tyrosine, tryptophan, L-threonine, L-methionine, L-lysine, L-glutamate, L-valine and L-isoleucine. Overexpression confers resistance to phenylalanine and increases export of phenylalanine, tyrosine and tryptophan. The protein is Aromatic amino acid exporter YddG (yddG) of Escherichia coli (strain K12).